Here is a 238-residue protein sequence, read N- to C-terminus: tRNA (guanine-N(7)-)-methyltransferase (238 aa).

S-adenosyl-L-methionine is bound by residues Glu68, Glu93, Asp120, and Asp143. Residue Asp143 is part of the active site. Residues Lys147, Asp179, and 216–219 (TKFE) each bind substrate.

This sequence belongs to the class I-like SAM-binding methyltransferase superfamily. TrmB family.

The catalysed reaction is guanosine(46) in tRNA + S-adenosyl-L-methionine = N(7)-methylguanosine(46) in tRNA + S-adenosyl-L-homocysteine. The protein operates within tRNA modification; N(7)-methylguanine-tRNA biosynthesis. Functionally, catalyzes the formation of N(7)-methylguanine at position 46 (m7G46) in tRNA. The polypeptide is tRNA (guanine-N(7)-)-methyltransferase (Shewanella denitrificans (strain OS217 / ATCC BAA-1090 / DSM 15013)).